A 139-amino-acid chain; its full sequence is ATP synthase epsilon chain (139 aa).

It belongs to the ATPase epsilon chain family. In terms of assembly, F-type ATPases have 2 components, CF(1) - the catalytic core - and CF(0) - the membrane proton channel. CF(1) has five subunits: alpha(3), beta(3), gamma(1), delta(1), epsilon(1). CF(0) has three main subunits: a, b and c.

Its subcellular location is the cell inner membrane. Produces ATP from ADP in the presence of a proton gradient across the membrane. This Marinomonas sp. (strain MWYL1) protein is ATP synthase epsilon chain.